Reading from the N-terminus, the 506-residue chain is ATP synthase subunit alpha (506 aa).

169–176 (GDRQTGKT) provides a ligand contact to ATP.

Belongs to the ATPase alpha/beta chains family. As to quaternary structure, F-type ATPases have 2 components, CF(1) - the catalytic core - and CF(0) - the membrane proton channel. CF(1) has five subunits: alpha(3), beta(3), gamma(1), delta(1), epsilon(1). CF(0) has three main subunits: a(1), b(2) and c(9-12). The alpha and beta chains form an alternating ring which encloses part of the gamma chain. CF(1) is attached to CF(0) by a central stalk formed by the gamma and epsilon chains, while a peripheral stalk is formed by the delta and b chains.

The protein localises to the cell membrane. The catalysed reaction is ATP + H2O + 4 H(+)(in) = ADP + phosphate + 5 H(+)(out). Functionally, produces ATP from ADP in the presence of a proton gradient across the membrane. The alpha chain is a regulatory subunit. The chain is ATP synthase subunit alpha from Acetivibrio thermocellus (strain ATCC 27405 / DSM 1237 / JCM 9322 / NBRC 103400 / NCIMB 10682 / NRRL B-4536 / VPI 7372) (Clostridium thermocellum).